We begin with the raw amino-acid sequence, 288 residues long: Serine/threonine-protein phosphatase PGAM5, mitochondrial (288 aa).

At 1 to 6 (MAFRQA) the chain is on the mitochondrial matrix side. The helical transmembrane segment at 7 to 29 (LQLAACGLAGGSAAVLFSAVAVG) threads the bilayer. The Mitochondrial intermembrane segment spans residues 30-288 (KPRAGGDADT…FMPPDKITRS (259 aa)). The interval 76 to 81 (NVEFGE) is interaction with KEAP1. Residue Ser-86 is modified to Phosphoserine. Residues Lys-115, Lys-143, and Lys-190 each carry the N6-acetyllysine modification.

It belongs to the phosphoglycerate mutase family. BPG-dependent PGAM subfamily. Dimer. Forms a ternary complex with NFE2L2 and KEAP1. Interacts with BCL2L1 and MAP3K5. Upon TNF-induced necrosis, forms in complex with RIPK1, RIPK3 and MLKL; the formation of this complex leads to PGAM5 phosphorylation. Isoform 2, but not isoform 1, interacts with DNM1L; this interaction leads to DNM1L dephosphorylation and activation and eventually to mitochondria fragmentation. In terms of processing, phosphorylated by the RIPK1/RIPK3 complex under necrotic conditions. This phosphorylation increases PGAM5 phosphatase activity. Post-translationally, proteolytically cleaved by PARL in response to loss of mitochondrial membrane potential.

It localises to the mitochondrion outer membrane. The protein localises to the mitochondrion inner membrane. It carries out the reaction O-phospho-L-seryl-[protein] + H2O = L-seryl-[protein] + phosphate. It catalyses the reaction O-phospho-L-threonyl-[protein] + H2O = L-threonyl-[protein] + phosphate. Functionally, mitochondrial serine/threonine phosphatase that dephosphorylates various substrates and thus plays a role in different biological processes including cellular senescence or mitophagy. Modulates cellular senescence by regulating mitochondrial dynamics. Mechanistically, participates in mitochondrial fission through dephosphorylating DNM1L/DRP1. Additionally, dephosphorylates MFN2 in a stress-sensitive manner and consequently protects it from ubiquitination and degradation to promote mitochondrial network formation. Regulates mitophagy independent of PARKIN by interacting with and dephosphorylating FUNDC1, which interacts with LC3. Regulates anti-oxidative response by forming a tertiary complex with KEAP1 and NRF2. Regulates necroptosis by acting as a RIPK3 target and recruiting the RIPK1-RIPK3-MLKL necrosis 'attack' complex to mitochondria. The chain is Serine/threonine-protein phosphatase PGAM5, mitochondrial (Pgam5) from Rattus norvegicus (Rat).